The chain runs to 208 residues: Uracil phosphoribosyltransferase (208 aa).

5-phospho-alpha-D-ribose 1-diphosphate is bound by residues arginine 78, arginine 103, and 130–138 (DPMLATGGS). Residues isoleucine 193 and 198 to 200 (GDA) contribute to the uracil site. A 5-phospho-alpha-D-ribose 1-diphosphate-binding site is contributed by aspartate 199.

The protein belongs to the UPRTase family. Mg(2+) is required as a cofactor.

It catalyses the reaction UMP + diphosphate = 5-phospho-alpha-D-ribose 1-diphosphate + uracil. It functions in the pathway pyrimidine metabolism; UMP biosynthesis via salvage pathway; UMP from uracil: step 1/1. Its activity is regulated as follows. Allosterically activated by GTP. Catalyzes the conversion of uracil and 5-phospho-alpha-D-ribose 1-diphosphate (PRPP) to UMP and diphosphate. In Proteus mirabilis (strain HI4320), this protein is Uracil phosphoribosyltransferase.